We begin with the raw amino-acid sequence, 301 residues long: Tyrosine recombinase XerD (301 aa).

One can recognise a Core-binding (CB) domain in the interval Gln-7–Lys-90. The 186-residue stretch at Arg-109–Leu-294 folds into the Tyr recombinase domain. Residues Arg-153, Lys-175, His-246, Arg-249, and His-272 contribute to the active site. Tyr-281 (O-(3'-phospho-DNA)-tyrosine intermediate) is an active-site residue.

This sequence belongs to the 'phage' integrase family. XerD subfamily. Forms a cyclic heterotetrameric complex composed of two molecules of XerC and two molecules of XerD.

It localises to the cytoplasm. In terms of biological role, site-specific tyrosine recombinase, which acts by catalyzing the cutting and rejoining of the recombining DNA molecules. The XerC-XerD complex is essential to convert dimers of the bacterial chromosome into monomers to permit their segregation at cell division. It also contributes to the segregational stability of plasmids. This chain is Tyrosine recombinase XerD, found in Chlamydia pneumoniae (Chlamydophila pneumoniae).